The following is a 151-amino-acid chain: Deoxyuridine 5'-triphosphate nucleotidohydrolase (151 aa).

Residues 70 to 72, Asn83, and 87 to 89 contribute to the substrate site; these read RSG and TID.

Belongs to the dUTPase family. Mg(2+) serves as cofactor.

The enzyme catalyses dUTP + H2O = dUMP + diphosphate + H(+). Its pathway is pyrimidine metabolism; dUMP biosynthesis; dUMP from dCTP (dUTP route): step 2/2. This enzyme is involved in nucleotide metabolism: it produces dUMP, the immediate precursor of thymidine nucleotides and it decreases the intracellular concentration of dUTP so that uracil cannot be incorporated into DNA. This is Deoxyuridine 5'-triphosphate nucleotidohydrolase from Ruegeria pomeroyi (strain ATCC 700808 / DSM 15171 / DSS-3) (Silicibacter pomeroyi).